The primary structure comprises 213 residues: Probable GTP-binding protein EngB (213 aa).

The EngB-type G domain occupies 30 to 204; it reads EGFEVAFAGR…YTVLAGWMEL (175 aa). GTP-binding positions include 38–45, 64–68, 82–85, 149–152, and 182–185; these read GRSNAGKS, GRTQL, DLPG, TKAD, and LFSA. Residues S45 and T66 each coordinate Mg(2+).

The protein belongs to the TRAFAC class TrmE-Era-EngA-EngB-Septin-like GTPase superfamily. EngB GTPase family. It depends on Mg(2+) as a cofactor.

In terms of biological role, necessary for normal cell division and for the maintenance of normal septation. This is Probable GTP-binding protein EngB from Pseudomonas fluorescens (strain ATCC BAA-477 / NRRL B-23932 / Pf-5).